The primary structure comprises 640 residues: Chitin elicitor receptor kinase 1 (640 aa).

An N-terminal signal peptide occupies residues 1–31; it reads MKFQMKMKSELCRTYKYWLILLVLWLSGVTQ. Topologically, residues 32–248 are extracellular; it reads RETGVLIVDA…GTVHWRSNVG (217 aa). 3 disulfides stabilise this stretch: C43–C104, C49–C166, and C102–C164. 3 consecutive LysM domains span residues 53–98, 113–160, and 179–227; these read AYYR…NIYL, FSYT…SLTI, and STYV…KAAN. Chitin is bound by residues 119–125 and 148–154; these read TNDTAEK and DLSSIYS. A helical transmembrane segment spans residues 249 to 269; it reads IIVGVVVGGIVLAVLLLFALI. The Cytoplasmic segment spans residues 270 to 640; the sequence is FGFKHFRRRK…SQPPSGNDQL (371 aa). A disordered region spans residues 286–308; the sequence is MQQSGLLSSSSMAGSKPSRSGST. The segment covering 289–307 has biased composition (low complexity); it reads SGLLSSSSMAGSKPSRSGS. The Protein kinase domain maps to 330–612; that stretch reads FSLAKKIGQG…RFAVVQLMTL (283 aa). ATP is bound by residues 336 to 344 and K357; that span reads IGQGGFASV. The active-site Proton acceptor is D452.

This sequence belongs to the protein kinase superfamily. Ser/Thr protein kinase family.

The protein localises to the cell membrane. It catalyses the reaction L-seryl-[protein] + ATP = O-phospho-L-seryl-[protein] + ADP + H(+). The catalysed reaction is L-threonyl-[protein] + ATP = O-phospho-L-threonyl-[protein] + ADP + H(+). Its function is as follows. Lysin motif (LysM) receptor kinase required as a cell surface receptor for chitin elicitor (chitooligosaccharides) signaling leading to innate immunity in response to biotic stresses. The CERK1, MEKK1a/b, MKK1a/b/c and MPK4a/b proteins are involved in pathogen defense. The pathway induces rapid growth inhibition, cell wall depositions and accumulation of defense-related transcripts. This protein is required for response to chitin. Is able to complement the A.thaliana cerk1 mutant. This Physcomitrium patens (Spreading-leaved earth moss) protein is Chitin elicitor receptor kinase 1.